A 246-amino-acid polypeptide reads, in one-letter code: Exosome complex component Rrp41 (246 aa).

The protein belongs to the RNase PH family. Rrp41 subfamily. Component of the archaeal exosome complex. Forms a hexameric ring-like arrangement composed of 3 Rrp41-Rrp42 heterodimers. The hexameric ring associates with a trimer of Rrp4 and/or Csl4 subunits.

It is found in the cytoplasm. Its function is as follows. Catalytic component of the exosome, which is a complex involved in RNA degradation. Has 3'-&gt;5' exoribonuclease activity. Can also synthesize heteromeric RNA-tails. This is Exosome complex component Rrp41 from Aeropyrum pernix (strain ATCC 700893 / DSM 11879 / JCM 9820 / NBRC 100138 / K1).